We begin with the raw amino-acid sequence, 410 residues long: DNA primase small subunit (410 aa).

Residues Glu-43, Asp-106, and Asp-108 contribute to the active site. Residues 118–129 (CCKDATVCPKCW) carry the Zinc knuckle motif motif.

It belongs to the eukaryotic-type primase small subunit family. Heterodimer of a small subunit and a large subunit.

In terms of biological role, DNA primase is the polymerase that synthesizes small RNA primers for the Okazaki fragments made during discontinuous DNA replication. In Caenorhabditis elegans, this protein is DNA primase small subunit (pri-1).